The chain runs to 366 residues: S-adenosylmethionine:tRNA ribosyltransferase-isomerase (366 aa).

Belongs to the QueA family. Monomer.

The protein resides in the cytoplasm. The enzyme catalyses 7-aminomethyl-7-carbaguanosine(34) in tRNA + S-adenosyl-L-methionine = epoxyqueuosine(34) in tRNA + adenine + L-methionine + 2 H(+). It functions in the pathway tRNA modification; tRNA-queuosine biosynthesis. Its function is as follows. Transfers and isomerizes the ribose moiety from AdoMet to the 7-aminomethyl group of 7-deazaguanine (preQ1-tRNA) to give epoxyqueuosine (oQ-tRNA). The sequence is that of S-adenosylmethionine:tRNA ribosyltransferase-isomerase from Parasynechococcus marenigrum (strain WH8102).